Reading from the N-terminus, the 152-residue chain is SsrA-binding protein (152 aa).

Belongs to the SmpB family.

The protein localises to the cytoplasm. Its function is as follows. Required for rescue of stalled ribosomes mediated by trans-translation. Binds to transfer-messenger RNA (tmRNA), required for stable association of tmRNA with ribosomes. tmRNA and SmpB together mimic tRNA shape, replacing the anticodon stem-loop with SmpB. tmRNA is encoded by the ssrA gene; the 2 termini fold to resemble tRNA(Ala) and it encodes a 'tag peptide', a short internal open reading frame. During trans-translation Ala-aminoacylated tmRNA acts like a tRNA, entering the A-site of stalled ribosomes, displacing the stalled mRNA. The ribosome then switches to translate the ORF on the tmRNA; the nascent peptide is terminated with the 'tag peptide' encoded by the tmRNA and targeted for degradation. The ribosome is freed to recommence translation, which seems to be the essential function of trans-translation. This Helicobacter acinonychis (strain Sheeba) protein is SsrA-binding protein.